Consider the following 99-residue polypeptide: Integration host factor subunit beta (99 aa).

Belongs to the bacterial histone-like protein family. Heterodimer of an alpha and a beta chain.

In terms of biological role, this protein is one of the two subunits of integration host factor, a specific DNA-binding protein that functions in genetic recombination as well as in transcriptional and translational control. This Rhizobium etli (strain CIAT 652) protein is Integration host factor subunit beta.